A 285-amino-acid polypeptide reads, in one-letter code: Polyamine aminopropyltransferase (285 aa).

Positions 2 to 237 (DLWFSESHTP…GYWCFGFASK (236 aa)) constitute a PABS domain. Residue Gln-31 coordinates S-methyl-5'-thioadenosine. Asp-86 contacts spermidine. S-methyl-5'-thioadenosine-binding positions include Glu-106 and 137 to 138 (DG). The active-site Proton acceptor is Asp-155.

Belongs to the spermidine/spermine synthase family. Homodimer or homotetramer.

Its subcellular location is the cytoplasm. The catalysed reaction is S-adenosyl 3-(methylsulfanyl)propylamine + putrescine = S-methyl-5'-thioadenosine + spermidine + H(+). It participates in amine and polyamine biosynthesis; spermidine biosynthesis; spermidine from putrescine: step 1/1. In terms of biological role, catalyzes the irreversible transfer of a propylamine group from the amino donor S-adenosylmethioninamine (decarboxy-AdoMet) to putrescine (1,4-diaminobutane) to yield spermidine. This Streptococcus uberis (strain ATCC BAA-854 / 0140J) protein is Polyamine aminopropyltransferase.